We begin with the raw amino-acid sequence, 350 residues long: Methylthioribose-1-phosphate isomerase (350 aa).

Aspartate 241 functions as the Proton donor in the catalytic mechanism.

This sequence belongs to the eIF-2B alpha/beta/delta subunits family. MtnA subfamily.

The protein localises to the cytoplasm. Its subcellular location is the nucleus. It catalyses the reaction 5-(methylsulfanyl)-alpha-D-ribose 1-phosphate = 5-(methylsulfanyl)-D-ribulose 1-phosphate. It functions in the pathway amino-acid biosynthesis; L-methionine biosynthesis via salvage pathway; L-methionine from S-methyl-5-thio-alpha-D-ribose 1-phosphate: step 1/6. Functionally, catalyzes the interconversion of methylthioribose-1-phosphate (MTR-1-P) into methylthioribulose-1-phosphate (MTRu-1-P). The polypeptide is Methylthioribose-1-phosphate isomerase (Nematostella vectensis (Starlet sea anemone)).